A 410-amino-acid chain; its full sequence is MEAFLEEAKASSRVLAGISGADKNRILKEMAQALRASTAEILKANALDMEDADRNDLTPALKDRLLLDESRVEGMAVAVEEIAALKEPVGRVLDGWVTEDGLKIEKVSVPIGVIGIIYESRPNVTSDTAALSFKSSNVCVLKGGKEAQHSNEAIAKVLRAVLKKNGLPEALISLIPDASREGVAKLIKMDKYVDLIVPRGGEGLIRYVSENASVPVVKHDKGQCHTYIDEDANVENAIRIAINAKVQRPGVCNAMETLLVDTAIAKEVLPLLKEAFDAAHTELKGCGETQEIIEVAPATEVDFDTEYLANILNIRVVDGVEGAIDHIVRYGSGHSEAIITENITTAEAFLNGIDAAVVYVNASTRFTDGGAFGFGAEVGISTNKLHARGPMGIEGLTTYKFKIYGSGQIR.

Belongs to the gamma-glutamyl phosphate reductase family.

The protein localises to the cytoplasm. It carries out the reaction L-glutamate 5-semialdehyde + phosphate + NADP(+) = L-glutamyl 5-phosphate + NADPH + H(+). Its pathway is amino-acid biosynthesis; L-proline biosynthesis; L-glutamate 5-semialdehyde from L-glutamate: step 2/2. Catalyzes the NADPH-dependent reduction of L-glutamate 5-phosphate into L-glutamate 5-semialdehyde and phosphate. The product spontaneously undergoes cyclization to form 1-pyrroline-5-carboxylate. This Sulfurovum sp. (strain NBC37-1) protein is Gamma-glutamyl phosphate reductase.